We begin with the raw amino-acid sequence, 465 residues long: Deoxyguanosinetriphosphate triphosphohydrolase-like protein (465 aa).

Positions M1 to N22 are disordered. In terms of domain architecture, HD spans R63 to L252.

It belongs to the dGTPase family. Type 3 subfamily.

In Listeria monocytogenes serovar 1/2a (strain ATCC BAA-679 / EGD-e), this protein is Deoxyguanosinetriphosphate triphosphohydrolase-like protein.